The chain runs to 349 residues: tRNA pseudouridine synthase D (349 aa).

F26 provides a ligand contact to substrate. The active-site Nucleophile is D79. Position 128 (N128) interacts with substrate. The TRUD domain occupies 154–302 (GVPNYFGSQR…VEGARRAILL (149 aa)). Residue F328 participates in substrate binding.

Belongs to the pseudouridine synthase TruD family.

It carries out the reaction uridine(13) in tRNA = pseudouridine(13) in tRNA. Its function is as follows. Responsible for synthesis of pseudouridine from uracil-13 in transfer RNAs. This chain is tRNA pseudouridine synthase D, found in Yersinia enterocolitica serotype O:8 / biotype 1B (strain NCTC 13174 / 8081).